The sequence spans 160 residues: Phosphopantetheine adenylyltransferase (160 aa).

Residue Ser-8 participates in substrate binding. ATP is bound by residues 8–9 and His-16; that span reads SF. Residues Lys-40, Thr-72, and Arg-86 each contribute to the substrate site. Residues 87–89, Glu-97, and 122–128 each bind ATP; these read GLR and YSFLSSS.

This sequence belongs to the bacterial CoaD family. Homohexamer. Requires Mg(2+) as cofactor.

The protein localises to the cytoplasm. The enzyme catalyses (R)-4'-phosphopantetheine + ATP + H(+) = 3'-dephospho-CoA + diphosphate. It functions in the pathway cofactor biosynthesis; coenzyme A biosynthesis; CoA from (R)-pantothenate: step 4/5. Functionally, reversibly transfers an adenylyl group from ATP to 4'-phosphopantetheine, yielding dephospho-CoA (dPCoA) and pyrophosphate. This Synechococcus sp. (strain CC9311) protein is Phosphopantetheine adenylyltransferase.